A 349-amino-acid chain; its full sequence is tRNA N6-adenosine threonylcarbamoyltransferase (349 aa).

The Fe cation site is built by His-115 and His-119. Residues 137–141, Asp-170, Gly-183, and Asn-281 each bind substrate; that span reads LASGG. Asp-309 is a Fe cation binding site.

It belongs to the KAE1 / TsaD family. The cofactor is Fe(2+).

It is found in the cytoplasm. The enzyme catalyses L-threonylcarbamoyladenylate + adenosine(37) in tRNA = N(6)-L-threonylcarbamoyladenosine(37) in tRNA + AMP + H(+). Required for the formation of a threonylcarbamoyl group on adenosine at position 37 (t(6)A37) in tRNAs that read codons beginning with adenine. Is involved in the transfer of the threonylcarbamoyl moiety of threonylcarbamoyl-AMP (TC-AMP) to the N6 group of A37, together with TsaE and TsaB. TsaD likely plays a direct catalytic role in this reaction. The chain is tRNA N6-adenosine threonylcarbamoyltransferase from Methylobacterium nodulans (strain LMG 21967 / CNCM I-2342 / ORS 2060).